A 460-amino-acid polypeptide reads, in one-letter code: UDP-N-acetylmuramate--L-alanine ligase (460 aa).

Residue 112–118 (GTHGKTT) coordinates ATP.

It belongs to the MurCDEF family.

The protein resides in the cytoplasm. The enzyme catalyses UDP-N-acetyl-alpha-D-muramate + L-alanine + ATP = UDP-N-acetyl-alpha-D-muramoyl-L-alanine + ADP + phosphate + H(+). The protein operates within cell wall biogenesis; peptidoglycan biosynthesis. In terms of biological role, cell wall formation. This Pelobacter propionicus (strain DSM 2379 / NBRC 103807 / OttBd1) protein is UDP-N-acetylmuramate--L-alanine ligase.